The primary structure comprises 382 residues: Histidinol-phosphate aminotransferase (382 aa).

Lys215 carries the N6-(pyridoxal phosphate)lysine modification. The disordered stretch occupies residues 360-382 (NSNNIDNQSKTHSQTSSIRKGTI).

This sequence belongs to the class-II pyridoxal-phosphate-dependent aminotransferase family. Histidinol-phosphate aminotransferase subfamily. In terms of assembly, homodimer. Pyridoxal 5'-phosphate is required as a cofactor.

It carries out the reaction L-histidinol phosphate + 2-oxoglutarate = 3-(imidazol-4-yl)-2-oxopropyl phosphate + L-glutamate. It functions in the pathway amino-acid biosynthesis; L-histidine biosynthesis; L-histidine from 5-phospho-alpha-D-ribose 1-diphosphate: step 7/9. The chain is Histidinol-phosphate aminotransferase from Yersinia pseudotuberculosis serotype IB (strain PB1/+).